We begin with the raw amino-acid sequence, 230 residues long: Porin OmpL (230 aa).

The N-terminal stretch at 1–20 (MKSLNTLVILTSVISTSVFA) is a signal peptide.

It belongs to the oligogalacturonate-specific porin KdgM (TC 1.B.35) family. OmpL subfamily.

The protein resides in the cell outer membrane. Its function is as follows. Outer membrane channel protein that allows an efficient diffusion of low-molecular-weight solutes such as small sugars and tetraglycine. However, the specific substrate recognized by the OmpL channel is unknown. The chain is Porin OmpL (ompL) from Salmonella typhimurium (strain LT2 / SGSC1412 / ATCC 700720).